A 378-amino-acid chain; its full sequence is Ferredoxin--NADP reductase, embryo isozyme, chloroplastic (378 aa).

Residues 1 to 62 (MASALGAQAS…SRHMNKIFSM (62 aa)) constitute a chloroplast transit peptide. Residues 93–221 (KEPYTATIVS…TGPSGKIMLL (129 aa)) enclose the FAD-binding FR-type domain. FAD contacts are provided by residues 153 to 156 (RLYS), 174 to 176 (CVR), Tyr-180, 195 to 197 (ICS), and Thr-237. NADP(+) contacts are provided by Ser-156 and Arg-176. NADP(+) is bound by residues Thr-237, 269–270 (VA), 299–300 (SR), Lys-309, 337–338 (GL), and Glu-376.

Belongs to the ferredoxin--NADP reductase type 1 family. Requires FAD as cofactor.

The protein resides in the plastid. Its subcellular location is the chloroplast. It carries out the reaction 2 reduced [2Fe-2S]-[ferredoxin] + NADP(+) + H(+) = 2 oxidized [2Fe-2S]-[ferredoxin] + NADPH. The protein operates within energy metabolism; photosynthesis. Its function is as follows. May play a key role in regulating the relative amounts of cyclic and non-cyclic electron flow to meet the demands of the plant for ATP and reducing power. Is involved in nitrate assimilation. This Oryza sativa subsp. japonica (Rice) protein is Ferredoxin--NADP reductase, embryo isozyme, chloroplastic.